Reading from the N-terminus, the 492-residue chain is Glutamyl-tRNA(Gln) amidotransferase subunit A (492 aa).

Residues K78 and S158 each act as charge relay system in the active site. The active-site Acyl-ester intermediate is the S182.

It belongs to the amidase family. GatA subfamily. As to quaternary structure, heterotrimer of A, B and C subunits.

The enzyme catalyses L-glutamyl-tRNA(Gln) + L-glutamine + ATP + H2O = L-glutaminyl-tRNA(Gln) + L-glutamate + ADP + phosphate + H(+). Allows the formation of correctly charged Gln-tRNA(Gln) through the transamidation of misacylated Glu-tRNA(Gln) in organisms which lack glutaminyl-tRNA synthetase. The reaction takes place in the presence of glutamine and ATP through an activated gamma-phospho-Glu-tRNA(Gln). The polypeptide is Glutamyl-tRNA(Gln) amidotransferase subunit A (Rhodopseudomonas palustris (strain BisA53)).